The chain runs to 432 residues: Protein trichome birefringence-like 23 (432 aa).

A helical; Signal-anchor for type II membrane protein membrane pass occupies residues Gln-13 to Val-35. Residues Gly-153 to Ser-155 carry the GDS motif motif. The DCXHWCLPGXXDXWN motif signature appears at Asp-404 to Asn-418.

It belongs to the PC-esterase family. TBL subfamily.

The protein resides in the membrane. Functionally, may act as a bridging protein that binds pectin and other cell wall polysaccharides. Probably involved in maintaining esterification of pectins. May be involved in the specific O-acetylation of cell wall polymers. This Arabidopsis thaliana (Mouse-ear cress) protein is Protein trichome birefringence-like 23 (TBL23).